The sequence spans 248 residues: MTEGARSTIDQGEVDRFSAMAAEWWSPTGKFKPLHKFNPVRLAYIRDKACANFGRDQKSPRPLEGLRVLDIGCGGGLLSEPVARMGASVVGADPSDKNIGIASTHAKASGVPVDYRAVTAEELAEAGETFDIVLNMEVVEHVADVEFFMTTCAKMVRPGGLIFVATINRTMKAAALAIFAAENILRWLPRGTHQYEKLVRPEELEKPLAASGLEITDRTGVFFNPLSNQWNLSRDMDVNYMLLGKRPA.

4 residues coordinate S-adenosyl-L-methionine: Arg-41, Gly-72, Asp-93, and Met-136.

It belongs to the methyltransferase superfamily. UbiG/COQ3 family.

The catalysed reaction is a 3-demethylubiquinol + S-adenosyl-L-methionine = a ubiquinol + S-adenosyl-L-homocysteine + H(+). The enzyme catalyses a 3-(all-trans-polyprenyl)benzene-1,2-diol + S-adenosyl-L-methionine = a 2-methoxy-6-(all-trans-polyprenyl)phenol + S-adenosyl-L-homocysteine + H(+). It functions in the pathway cofactor biosynthesis; ubiquinone biosynthesis. Its function is as follows. O-methyltransferase that catalyzes the 2 O-methylation steps in the ubiquinone biosynthetic pathway. In Rhizobium etli (strain CIAT 652), this protein is Ubiquinone biosynthesis O-methyltransferase.